The following is a 51-amino-acid chain: Large ribosomal subunit protein bL33 (51 aa).

This sequence belongs to the bacterial ribosomal protein bL33 family.

This chain is Large ribosomal subunit protein bL33, found in Francisella philomiragia subsp. philomiragia (strain ATCC 25017 / CCUG 19701 / FSC 153 / O#319-036).